The chain runs to 394 residues: Elongation factor Tu (394 aa).

One can recognise a tr-type G domain in the interval 10 to 204 (KTHLNVGTIG…TLDTYIEDPV (195 aa)). The segment at 19-26 (GHVDHGKT) is G1. 19–26 (GHVDHGKT) is a binding site for GTP. Thr-26 contributes to the Mg(2+) binding site. The interval 60-64 (GITIK) is G2. The tract at residues 81–84 (DCPG) is G3. GTP-binding positions include 81–85 (DCPGH) and 136–139 (NKCD). Positions 136–139 (NKCD) are G4. A G5 region spans residues 174-176 (SAL).

Belongs to the TRAFAC class translation factor GTPase superfamily. Classic translation factor GTPase family. EF-Tu/EF-1A subfamily. Monomer.

It localises to the cytoplasm. The enzyme catalyses GTP + H2O = GDP + phosphate + H(+). In terms of biological role, GTP hydrolase that promotes the GTP-dependent binding of aminoacyl-tRNA to the A-site of ribosomes during protein biosynthesis. This is Elongation factor Tu from Aster yellows witches'-broom phytoplasma (strain AYWB).